The sequence spans 212 residues: Entry-fusion complex associated protein OPG083 (212 aa).

Residues 1-175 (MAETKEFKTL…IIENRLPYYD (175 aa)) are Virion surface-facing. Intrachain disulfides connect Cys-33-Cys-55, Cys-47-Cys-127, and Cys-107-Cys-149. Residues 176–196 (PWFLVGVAIILVIFTVAICSI) form a helical membrane-spanning segment. Residues 197-212 (RRNLALKYRYGTFLYV) lie on the Intravirion side of the membrane.

This sequence belongs to the orthopoxvirus OPG053 family. Component of the entry fusion complex (EFC) composed of OPG053/F9, OPG076/O3, OPG086/G3, OPG094/G9, OPG095/L1, OPG099/L5, OPG107/H2, OPG143/A16, OPG104/J5, OPG147/A21 and OPG155/A28. Except for OPG095/L1 and OPG052/F9, each of the EFC proteins is required for assembly or stability of the complex. Disulfid bonds are oxidized in the cytoplasm by OPG088 protein. Post-translationally, unglycosylated because produced in viral factories instead of the classic ER -Golgi route.

It localises to the virion membrane. In terms of biological role, component of the entry fusion complex (EFC), which consists of 11 proteins. During cell infection, this complex mediates entry of the virion core into the host cytoplasm by a two-step mechanism consisting of lipid mixing of the viral and cellular membranes and subsequent pore formation. The protein is Entry-fusion complex associated protein OPG083 (OPG053) of Vaccinia virus (strain Western Reserve) (VACV).